The primary structure comprises 339 residues: 4-hydroxy-2-oxovalerate aldolase 3 (339 aa).

The 253-residue stretch at 7-259 (IRVTDTSLRD…KTGIDFFAIA (253 aa)) folds into the Pyruvate carboxyltransferase domain. Residue 15–16 (RD) coordinates substrate. Residue Asp-16 participates in Mn(2+) binding. Residue His-19 is the Proton acceptor of the active site. Residues Ser-169 and His-198 each contribute to the substrate site. 2 residues coordinate Mn(2+): His-198 and His-200. Tyr-289 contacts substrate.

The protein belongs to the 4-hydroxy-2-oxovalerate aldolase family.

It carries out the reaction (S)-4-hydroxy-2-oxopentanoate = acetaldehyde + pyruvate. In Rhodococcus opacus (strain B4), this protein is 4-hydroxy-2-oxovalerate aldolase 3.